Reading from the N-terminus, the 257-residue chain is uncharacterized protein (257 aa).

Active-site charge relay system residues include Ser-122 and His-236.

This sequence belongs to the peptidase S9B family.

This is an uncharacterized protein from Bacillus subtilis (strain 168).